Here is a 178-residue protein sequence, read N- to C-terminus: Gamma-crystallin M1 (178 aa).

2 consecutive Beta/gamma crystallin 'Greek key' domains span residues 2 to 40 (GKII…RVES) and 41 to 86 (GCFM…RMIP). The connecting peptide stretch occupies residues 87-91 (PYRGS). Beta/gamma crystallin 'Greek key' domains are found at residues 92-132 (YRMR…HVMD) and 133-175 (GHWL…RRIT).

It belongs to the beta/gamma-crystallin family. Monomer.

Crystallins are the dominant structural components of the vertebrate eye lens. This chain is Gamma-crystallin M1, found in Cyprinus carpio (Common carp).